The primary structure comprises 231 residues: Flagellar L-ring protein (231 aa).

Positions 1–18 (MNRLMIVSLLGIATVLGG) are cleaved as a signal peptide. Cysteine 19 carries the N-palmitoyl cysteine lipid modification. Cysteine 19 is lipidated: S-diacylglycerol cysteine. The segment at 118-141 (LSLSAEYGGSRDAKGDSQAGQSNS) is disordered.

This sequence belongs to the FlgH family. In terms of assembly, the basal body constitutes a major portion of the flagellar organelle and consists of four rings (L,P,S, and M) mounted on a central rod.

It localises to the cell outer membrane. It is found in the bacterial flagellum basal body. Functionally, assembles around the rod to form the L-ring and probably protects the motor/basal body from shearing forces during rotation. The polypeptide is Flagellar L-ring protein (Pseudomonas paraeruginosa (strain DSM 24068 / PA7) (Pseudomonas aeruginosa (strain PA7))).